Here is a 70-residue protein sequence, read N- to C-terminus: Small ribosomal subunit protein bS21 (70 aa).

It belongs to the bacterial ribosomal protein bS21 family.

The sequence is that of Small ribosomal subunit protein bS21 from Campylobacter hominis (strain ATCC BAA-381 / DSM 21671 / CCUG 45161 / LMG 19568 / NCTC 13146 / CH001A).